We begin with the raw amino-acid sequence, 94 residues long: ESAT-6-like protein EsxI (94 aa).

The protein belongs to the WXG100 family. ESAT-6 subfamily.

The protein localises to the secreted. This is ESAT-6-like protein EsxI from Mycobacterium bovis (strain ATCC BAA-935 / AF2122/97).